A 274-amino-acid polypeptide reads, in one-letter code: NH(3)-dependent NAD(+) synthetase (274 aa).

Position 46–53 (46–53) interacts with ATP; the sequence is GISGGQDS. Residue Asp52 participates in Mg(2+) binding. Residue Arg140 coordinates deamido-NAD(+). Thr160 contributes to the ATP binding site. Glu165 lines the Mg(2+) pocket. Residues Lys173 and Asp180 each contribute to the deamido-NAD(+) site. The ATP site is built by Lys189 and Thr211. Position 260–261 (260–261) interacts with deamido-NAD(+); it reads HK.

Belongs to the NAD synthetase family. Homodimer.

The catalysed reaction is deamido-NAD(+) + NH4(+) + ATP = AMP + diphosphate + NAD(+) + H(+). It functions in the pathway cofactor biosynthesis; NAD(+) biosynthesis; NAD(+) from deamido-NAD(+) (ammonia route): step 1/1. Its function is as follows. Catalyzes the ATP-dependent amidation of deamido-NAD to form NAD. Uses ammonia as a nitrogen source. In Lysinibacillus sphaericus (strain C3-41), this protein is NH(3)-dependent NAD(+) synthetase.